A 220-amino-acid chain; its full sequence is Octanoyltransferase (220 aa).

Residues 27–208 (PGTADEIWLC…QLARAHGHAV (182 aa)) form the BPL/LPL catalytic domain. Substrate is bound by residues 66 to 73 (RGGQVTYH), 139 to 141 (ALG), and 152 to 154 (GLA). Residue Cys170 is the Acyl-thioester intermediate of the active site.

The protein belongs to the LipB family.

The protein localises to the cytoplasm. It catalyses the reaction octanoyl-[ACP] + L-lysyl-[protein] = N(6)-octanoyl-L-lysyl-[protein] + holo-[ACP] + H(+). The protein operates within protein modification; protein lipoylation via endogenous pathway; protein N(6)-(lipoyl)lysine from octanoyl-[acyl-carrier-protein]: step 1/2. Catalyzes the transfer of endogenously produced octanoic acid from octanoyl-acyl-carrier-protein onto the lipoyl domains of lipoate-dependent enzymes. Lipoyl-ACP can also act as a substrate although octanoyl-ACP is likely to be the physiological substrate. The sequence is that of Octanoyltransferase from Bordetella parapertussis (strain 12822 / ATCC BAA-587 / NCTC 13253).